The sequence spans 299 residues: Coenzyme PQQ synthesis protein B (299 aa).

This sequence belongs to the PqqB family.

Its pathway is cofactor biosynthesis; pyrroloquinoline quinone biosynthesis. Its function is as follows. May be involved in the transport of PQQ or its precursor to the periplasm. The sequence is that of Coenzyme PQQ synthesis protein B from Methylobacterium radiotolerans (strain ATCC 27329 / DSM 1819 / JCM 2831 / NBRC 15690 / NCIMB 10815 / 0-1).